The sequence spans 351 residues: Protein pelota homolog (351 aa).

This sequence belongs to the eukaryotic release factor 1 family. Pelota subfamily. As to quaternary structure, monomer. It depends on a divalent metal cation as a cofactor.

It localises to the cytoplasm. Its function is as follows. May function in recognizing stalled ribosomes, interact with stem-loop structures in stalled mRNA molecules, and effect endonucleolytic cleavage of the mRNA. May play a role in the release non-functional ribosomes and degradation of damaged mRNAs. Has endoribonuclease activity. The sequence is that of Protein pelota homolog from Methanosphaera stadtmanae (strain ATCC 43021 / DSM 3091 / JCM 11832 / MCB-3).